Reading from the N-terminus, the 182-residue chain is MVEQNPAAVIEWVDIVDEQNNVIAQSSRQQMRAQRLRHRATYIVVHDGMGKILVQRRTESKDFHPGKLDATAGGVVQSGENYLESARREAEEELGIAGVPFAEHGQFYFEEECCRVWGALFSCVSHGPFALQPEEIDEVCWMVPEEITARCDEFTPDSLKALSLWLTRNNEQDYGKITPREA.

Residues 36–164 (LRHRATYIVV…TPDSLKALSL (129 aa)) form the Nudix hydrolase domain. The Nudix box motif lies at 73–95 (GGVVQSGENYLESARREAEEELG). Mg(2+) contacts are provided by Glu89 and Glu93.

The protein belongs to the Nudix hydrolase family. Mg(2+) is required as a cofactor.

This is an uncharacterized protein from Yersinia pestis.